A 482-amino-acid polypeptide reads, in one-letter code: Pancreatic lipase-related protein 2 (482 aa).

A signal peptide spans 1-30; it reads MPMDVRGCLFPSVQMLLCWLVSLLLATVGG. A disulfide bridge connects residues Cys34 and Cys40. A glycan (N-linked (GlcNAc...) asparagine) is linked at Asn92. The required for galactolipase activity stretch occupies residues 106–118; it reads IHGFIDKGEEGWL. Residues Cys122 and Cys133 are joined by a disulfide bond. Ser184 (nucleophile) is an active-site residue. Asp208 functions as the Charge relay system in the catalytic mechanism. Residues Glu219, Arg222, Asp224, and Asp227 each coordinate Ca(2+). Cys269 and Cys293 are disulfide-bonded. A required for galactolipase activity region spans residues 270 to 292; the sequence is QKNILSTIVDINGIWEGTRNFAA. Catalysis depends on His295, which acts as the Charge relay system. Cystine bridges form between Cys317/Cys328 and Cys331/Cys336. N-linked (GlcNAc...) asparagine glycans are attached at residues Asn366 and Asn441. Positions 370–482 constitute a PLAT domain; that stretch reads WRYKVSVTLS…EDVLQSLYPC (113 aa). Cys466 and Cys482 are joined by a disulfide.

Belongs to the AB hydrolase superfamily. Lipase family. In terms of tissue distribution, expressed in acinar cells of pancreas (at protein level).

The protein resides in the secreted. Its subcellular location is the zymogen granule membrane. It is found in the cell projection. It localises to the neuron projection. It catalyses the reaction a triacylglycerol + H2O = a diacylglycerol + a fatty acid + H(+). The catalysed reaction is a 1,2-diacyl-3-O-(beta-D-galactosyl)-sn-glycerol + 2 H2O = 3-beta-D-galactosyl-sn-glycerol + 2 a fatty acid + 2 H(+). It carries out the reaction 1,2,3-tri-(9Z-octadecenoyl)-glycerol + H2O = di-(9Z)-octadecenoylglycerol + (9Z)-octadecenoate + H(+). The enzyme catalyses di-(9Z)-octadecenoylglycerol + H2O = (9Z-octadecenoyl)-glycerol + (9Z)-octadecenoate + H(+). It catalyses the reaction (9Z-octadecenoyl)-glycerol + H2O = glycerol + (9Z)-octadecenoate + H(+). The catalysed reaction is 1-(9Z-octadecenoyl)-glycerol + H2O = glycerol + (9Z)-octadecenoate + H(+). It carries out the reaction 1,2,3-tripropanoylglycerol + H2O = dipropanoylglycerol + propanoate + H(+). The enzyme catalyses 1,2,3-tributanoylglycerol + H2O = dibutanoylglycerol + butanoate + H(+). It catalyses the reaction 1,2,3-trioctanoylglycerol + H2O = dioctanoylglycerol + octanoate + H(+). The catalysed reaction is 1,2-didecanoylglycerol + H2O = decanoylglycerol + decanoate + H(+). It carries out the reaction long chain 1,2-diacyl-3-O-beta-D-galactosyl-sn-glycerol + H2O = long chain acyl-3-O-beta-D-galactosyl-sn-glycerol + a fatty acid + H(+). The enzyme catalyses 1,2-dioctanoyl-3-O-beta-D-galactosyl-sn-glycerol + H2O = octanoyl-3-(beta-D-galactosyl)-sn-glycerol + octanoate + H(+). It catalyses the reaction 1,2-didodecanoyl-3-beta-D-galactosyl-sn-glycerol + H2O = dodecanoyl-3-beta-D-galactosyl-sn-glycerol + dodecanoate + H(+). The catalysed reaction is 1-beta-D-galactosyl-2,3-didodecanoyl-sn-glycerol + H2O = 1-beta-D-galactosyl-dodecanoyl-sn-glycerol + dodecanoate + H(+). It carries out the reaction a 1,2-diacyl-3-O-[alpha-D-galactosyl-(1-&gt;6)-beta-D-galactosyl]-sn-glycerol + H2O = acyl-3-O-[alpha-D-galactosyl-(1-&gt;6)-beta-D-galactosyl]-sn-glycerol + a fatty acid + H(+). The enzyme catalyses long chain 1,2-diacyl-3-O-[alpha-D-galactosyl-(1-&gt;6)-beta-D-galactosyl]-sn-glycerol + H2O = long chain acyl-3-O-[alpha-D-galactosyl-(1-&gt;6)-beta-D-galactosyl]-sn-glycerol + a fatty acid + H(+). It catalyses the reaction 1,2-dioctanoyl-3-O-[alpha-D-galactosyl-(1-&gt;6)-beta-D-galactosyl]-sn-glycerol + H2O = octanoyl-3-O-[alpha-D-galactosyl-(1-&gt;6)-beta-D-galactosyl]-sn-glycerol + octanoate + H(+). The catalysed reaction is 1,2-didodecanoyl-3-O-[alpha-D-galactosyl-(1-&gt;6)-beta-D-galactosyl]-sn-glycerol + H2O = dodecanoyl-3-O-[alpha-D-galactosyl-(1-&gt;6)-beta-D-galactosyl]-sn-glycerol + dodecanoate + H(+). It carries out the reaction a 1,2-diacyl-sn-glycero-3-phosphocholine + H2O = a monoacyl-sn-glycero-3-phosphocholine + a fatty acid + H(+). The protein operates within glycerolipid metabolism; triacylglycerol degradation. It functions in the pathway glycolipid metabolism. Its activity is regulated as follows. CLPS stimulates triacylglycerol lipase activity. Triacylglycerol lipase activity is not inhibited by increasing bile salt concentration. Its function is as follows. Lipase that primarily hydrolyzes triglycerides and galactosylglycerides. In neonates, may play a major role in pancreatic digestion of dietary fats such as milk fat globules enriched in long-chain triglycerides. Hydrolyzes short-, medium- and long-chain fatty acyls in triglycerides without apparent positional specificity. Can completely deacylate triacylglycerols. When the liver matures and bile salt synthesis increases, likely functions mainly as a galactolipase and monoacylglycerol lipase. Hydrolyzes monogalactosyldiglycerols (MGDG) and digalactosyldiacylglycerols (DGDG) present in a plant-based diet, releasing long-chain polyunsaturated fatty acids. Hydrolyzes medium- and long-chain fatty acyls in galactolipids. May act together with LIPF to hydrolyze partially digested triglycerides. Hydrolyzes long-chain monoglycerides with high efficiency. In cytotoxic T cells, contributes to perforin-dependent cell lysis, but is unlikely to mediate direct cytotoxicity. Also has low phospholipase activity. In neurons, required for the localization of the phospholipid 1-oleoyl-2-palmitoyl-PC (OPPC) to neurite tips through acyl chain remodeling of membrane phospholipids. The resulting OPPC-rich lipid membrane domain recruits the t-SNARE protein STX4 by selectively interacting with the STX4 transmembrane domain and this promotes surface expression of the dopamine transporter SLC6A3/DAT at neurite tips by facilitating fusion of SLC6A3-containing transport vesicles with the plasma membrane. The sequence is that of Pancreatic lipase-related protein 2 from Mus musculus (Mouse).